The primary structure comprises 546 residues: MTTNYIFVTGGVVSSLGKGIAAASLAAILEARGLKVTMMKLDPYINVDPGTMSPTQHGEVFVTEDGAETDLDLGHYERFIRTKMTKRNNFTAGRVYADVLRKERRGDYLGATIQVIPHITNAIKERVISGAAGHDIALVEVGGTVGDIESLPFMEAIRQLAVELGREHTMFMHLTLVPYLVAAGELKTKPTQHSVKELLSIGIQPDILVCRSDRVIPANERKKIALFCNVQEKAVISMKDVDSIYKIPQLIRAQGTDDLVCQRFGITAPAADLSEWEQVIYEEANPTGEVTIGMVGKYIELPDAYKSVNEALKHAGLKNRLSVTIKYIDSQDVESKGTEILEGLDAILVPGGFGDRGIEGKILAAQYARENAVPYLGICLGMQVALIDYARNVANMEGAHSSEFSKDTKFPVVGLITEWIDGDGNVEERTEKSDLGGTMRLGSQLCHLAKGSKARELYGNATVEERHRHRYEVNNNLLPQLEKAGLKISGLSADKKLVEIIEIPNHPWFVAAQFHPEFTSTPRDGHPLFEGFVKAAGENARGEFEK.

Positions Met1 to Ile266 are amidoligase domain. Position 14 (Ser14) interacts with CTP. Ser14 contributes to the UTP binding site. ATP contacts are provided by residues Ser15–Ile20 and Asp72. Residues Asp72 and Glu140 each coordinate Mg(2+). CTP-binding positions include Asp147 to Glu149, Lys187 to Gln192, and Lys223. Residues Lys187–Gln192 and Lys223 each bind UTP. ATP is bound at residue Lys239–Val241. A Glutamine amidotransferase type-1 domain is found at Thr291–Gly542. Position 352 (Gly352) interacts with L-glutamine. Cys379 serves as the catalytic Nucleophile; for glutamine hydrolysis. L-glutamine is bound by residues Leu380–Gln383, Glu403, and Arg470. Catalysis depends on residues His515 and Glu517.

The protein belongs to the CTP synthase family. As to quaternary structure, homotetramer.

It catalyses the reaction UTP + L-glutamine + ATP + H2O = CTP + L-glutamate + ADP + phosphate + 2 H(+). It carries out the reaction L-glutamine + H2O = L-glutamate + NH4(+). The enzyme catalyses UTP + NH4(+) + ATP = CTP + ADP + phosphate + 2 H(+). Its pathway is pyrimidine metabolism; CTP biosynthesis via de novo pathway; CTP from UDP: step 2/2. With respect to regulation, allosterically activated by GTP, when glutamine is the substrate; GTP has no effect on the reaction when ammonia is the substrate. The allosteric effector GTP functions by stabilizing the protein conformation that binds the tetrahedral intermediate(s) formed during glutamine hydrolysis. Inhibited by the product CTP, via allosteric rather than competitive inhibition. In terms of biological role, catalyzes the ATP-dependent amination of UTP to CTP with either L-glutamine or ammonia as the source of nitrogen. Regulates intracellular CTP levels through interactions with the four ribonucleotide triphosphates. The polypeptide is CTP synthase (Aliivibrio salmonicida (strain LFI1238) (Vibrio salmonicida (strain LFI1238))).